A 179-amino-acid chain; its full sequence is MENTLKTLYNNKICKDLQKKFRYKNIHQIPKLVKITINRGLGEAANNKQVLEKSMNEIAAITGQKPKITKSKKAIAGFKIRENIAIGLVVTLRRDKMYDFLNKLINLALPRIRDFRGISYKTFDGRGNYNLGLKEQIIFPEIKYDNVDKIRGLDITIVTTAKNDEEGLTLLKEFGMPFM.

The protein belongs to the universal ribosomal protein uL5 family. Part of the 50S ribosomal subunit; contacts the 5S rRNA.

The protein localises to the plastid. Its subcellular location is the chloroplast. Functionally, binds 5S rRNA, forms part of the central protuberance of the 50S subunit. The chain is Large ribosomal subunit protein uL5c (rpl5) from Gracilaria tenuistipitata var. liui (Red alga).